The following is a 343-amino-acid chain: Envelope glycoprotein K (343 aa).

The first 31 residues, 1–31, serve as a signal peptide directing secretion; sequence MLLGGRTAYLSVLGLITAYAAFTIWYTLTAQ. The Extracellular segment spans residues 32 to 118; that stretch reads LHNPCVYATV…VVGTRNCRAY (87 aa). N-linked (GlcNAc...) asparagine; by host glycosylation is found at asparagine 57 and asparagine 89. The helical transmembrane segment at 119 to 139 threads the bilayer; the sequence is LWSVQLQMITGAWLIYIAFLC. The Cytoplasmic portion of the chain corresponds to 140–213; sequence LRQERRLLGP…DPIGFLCEHS (74 aa). The chain crosses the membrane as a helical span at residues 214–234; it reads AALALIGLEVGTHFVARLLVV. At 235 to 251 the chain is on the extracellular side; sequence GTVTLVHTPCSQIYPIY. A helical membrane pass occupies residues 252–272; it reads LKLASWGFVVAVTIVEIVAII. Topologically, residues 273–303 are cytoplasmic; it reads YEKPPKTGSSANPPTPATHGVKGLCTSCCST. A helical membrane pass occupies residues 304–324; sequence VLANLCGKLVYLLLVIGAVSI. Over 325-343 the chain is Extracellular; it reads LLHYEQRIQIGLLGESFSS.

This sequence belongs to the alphaherpesvirinae glycoprotein K family. As to quaternary structure, interacts (via UL20 interaction region) with protein UL20 homolog (via N-terminus); this interaction probably plays a role in the coordinate transport of protein UL20 homolog and gK to the trans-Golgi network (TGN), and is required for the cell surface expression of gK. N-glycosylated.

The protein resides in the host cell membrane. It localises to the host endosome membrane. It is found in the host Golgi apparatus membrane. Glycoprotein that probably modulates membrane fusion events during secondary envelopment of cytoplasmic capsids that bud into specific trans-Golgi network (TGN)-derived membranes. In Equine herpesvirus 1 (strain Ab4p) (EHV-1), this protein is Envelope glycoprotein K (gK).